The primary structure comprises 364 residues: Alpha-2-HS-glycoprotein (364 aa).

Residues 1-15 constitute a signal peptide (or 17); that stretch reads MKSFLLLFCLAQLCS. Residues 27 to 133 form the Cystatin fetuin-A-type 1 domain; that stretch reads YKEPACDDPD…QFSVLFTKCD (107 aa). 6 disulfides stabilise this stretch: Cys32–Cys355, Cys89–Cys100, Cys114–Cys132, Cys146–Cys149, Cys208–Cys219, and Cys230–Cys248. Residue Asn99 is glycosylated (N-linked (GlcNAc...) asparagine). 3 positions are modified to phosphoserine: Ser134, Ser135, and Ser138. The Cystatin fetuin-A-type 2 domain maps to 144 to 256; that stretch reads KLCPDCPLLA…TCTLFQTQPV (113 aa). N-linked (GlcNAc...) asparagine glycosylation is found at Asn156 and Asn176. Residue Ser301 is glycosylated (O-linked (GalNAc...) serine). Phosphothreonine is present on Thr319. A phosphoserine mark is found at Ser321, Ser325, Ser328, and Ser330. An O-linked (GalNAc...) threonine glycan is attached at Thr339.

Belongs to the fetuin family. Post-translationally, phosphorylated by FAM20C in the extracellular medium.

The protein localises to the secreted. The polypeptide is Alpha-2-HS-glycoprotein (AHSG) (Ovis aries (Sheep)).